The following is a 334-amino-acid chain: Aspartate carbamoyltransferase catalytic subunit (334 aa).

Positions 71 and 72 each coordinate carbamoyl phosphate. Lysine 99 lines the L-aspartate pocket. Carbamoyl phosphate contacts are provided by arginine 121, histidine 151, and glutamine 154. Residues arginine 184 and arginine 239 each coordinate L-aspartate. 2 residues coordinate carbamoyl phosphate: glycine 280 and proline 281.

This sequence belongs to the aspartate/ornithine carbamoyltransferase superfamily. ATCase family. In terms of assembly, heterododecamer (2C3:3R2) of six catalytic PyrB chains organized as two trimers (C3), and six regulatory PyrI chains organized as three dimers (R2).

The catalysed reaction is carbamoyl phosphate + L-aspartate = N-carbamoyl-L-aspartate + phosphate + H(+). Its pathway is pyrimidine metabolism; UMP biosynthesis via de novo pathway; (S)-dihydroorotate from bicarbonate: step 2/3. Its function is as follows. Catalyzes the condensation of carbamoyl phosphate and aspartate to form carbamoyl aspartate and inorganic phosphate, the committed step in the de novo pyrimidine nucleotide biosynthesis pathway. The chain is Aspartate carbamoyltransferase catalytic subunit from Pseudomonas fluorescens (strain ATCC BAA-477 / NRRL B-23932 / Pf-5).